An 88-amino-acid polypeptide reads, in one-letter code: Small ribosomal subunit protein bS20 (88 aa).

Residues 1 to 25 form a disordered region; that stretch reads MANSAQARKRARQAVAQNAHNSSLR.

It belongs to the bacterial ribosomal protein bS20 family.

Binds directly to 16S ribosomal RNA. The sequence is that of Small ribosomal subunit protein bS20 from Cupriavidus pinatubonensis (strain JMP 134 / LMG 1197) (Cupriavidus necator (strain JMP 134)).